The primary structure comprises 185 residues: Ribosome-recycling factor (185 aa).

This sequence belongs to the RRF family.

It is found in the cytoplasm. Responsible for the release of ribosomes from messenger RNA at the termination of protein biosynthesis. May increase the efficiency of translation by recycling ribosomes from one round of translation to another. This Haemophilus ducreyi (strain 35000HP / ATCC 700724) protein is Ribosome-recycling factor.